The primary structure comprises 469 residues: Glutamate--tRNA ligase (469 aa).

The short motif at 9–19 (PSPTGFLHVGG) is the 'HIGH' region element. Zn(2+)-binding residues include cysteine 98, cysteine 100, cysteine 125, and aspartate 127. Positions 236–240 (KLSKR) match the 'KMSKS' region motif. Lysine 239 contacts ATP.

The protein belongs to the class-I aminoacyl-tRNA synthetase family. Glutamate--tRNA ligase type 1 subfamily. Monomer. It depends on Zn(2+) as a cofactor.

The protein resides in the cytoplasm. It catalyses the reaction tRNA(Glu) + L-glutamate + ATP = L-glutamyl-tRNA(Glu) + AMP + diphosphate. Functionally, catalyzes the attachment of glutamate to tRNA(Glu) in a two-step reaction: glutamate is first activated by ATP to form Glu-AMP and then transferred to the acceptor end of tRNA(Glu). This chain is Glutamate--tRNA ligase, found in Shewanella woodyi (strain ATCC 51908 / MS32).